The following is a 604-amino-acid chain: MRRCLNTRPGETGMDVTSRCTLGDPNKLPEGVPQPARMPYVSDKHPRQTLEVINLLRKHRELCDVVLVVGAKKIYAHRVILSACSPYFRAMFTGELAESRQTEVVIRDIDERAMELLIDFSYTSQITVEEGNVQTLLPAACLLQLAEIQEACCEFLKRQLDPSNCLGIRAFADTHSCRELLRIADKFTQHNFQEVMESEEFMLLPANQLIDIISSDELNVRSEEQVFNAVMAWVKYSIQERRPQLPQVLQHVRLPLLSPKFLVGTVGSDPLIKSDEECRDLVDEAKNYLLLPQERPLMQGPRTRPRKPIRCGEVLFAVGGWCSGDAISSVERYDPQTNEWRMVASMSKRRCGVGVSVLDDLLYAVGGHDGSSYLNSVERYDPKTNQWSSDVAPTSTCRTSVGVAVLGGYLYAVGGQDGVSCLNIVERYDPKENKWTRVASMSTRRLGVAVAVLGGFLYAVGGSDGTSPLNTVERYNPQENRWHTIAPMGTRRKHLGCAVYQDMIYAVGGRDDTTELSSAERYNPRTNQWSPVVAMTSRRSGVGLAVVNGQLMAVGGFDGTTYLKTIEVFDPDANTWRLYGGMNYRRLGGGVGVIKMTHCESHIW.

Residues Cys-63–Glu-130 form the BTB domain. A BACK domain is found at Cys-165–Gly-267. Kelch repeat units lie at residues Val-314–Asp-360, Leu-362–Gly-408, Tyr-409–Gly-455, Leu-457–Asp-502, Ile-504–Gly-549, and Leu-551–Met-596.

In terms of assembly, component of the BCR(KLHL20) E3 ubiquitin ligase complex, at least composed of cul3, klhl20 and rbx1.

It localises to the cytoplasm. It is found in the perinuclear region. Its subcellular location is the nucleus. Its pathway is protein modification; protein ubiquitination. Its function is as follows. Substrate-specific adapter of a BCR (BTB-CUL3-RBX1) E3 ubiquitin-protein ligase complex involved in interferon response and anterograde Golgi to endosome transport. The BCR(KLHL20) E3 ubiquitin ligase complex mediates the ubiquitination of target proteins, leading to their degradation by the proteasome. It also specifically mediates 'Lys-33'-linked ubiquitination. The chain is Kelch-like protein 20 (klhl20) from Xenopus laevis (African clawed frog).